We begin with the raw amino-acid sequence, 156 residues long: ATP synthase subunit b (156 aa).

The helical transmembrane segment at Ile5–Pro27 threads the bilayer.

The protein belongs to the ATPase B chain family. F-type ATPases have 2 components, F(1) - the catalytic core - and F(0) - the membrane proton channel. F(1) has five subunits: alpha(3), beta(3), gamma(1), delta(1), epsilon(1). F(0) has three main subunits: a(1), b(2) and c(10-14). The alpha and beta chains form an alternating ring which encloses part of the gamma chain. F(1) is attached to F(0) by a central stalk formed by the gamma and epsilon chains, while a peripheral stalk is formed by the delta and b chains.

The protein resides in the cell inner membrane. Functionally, f(1)F(0) ATP synthase produces ATP from ADP in the presence of a proton or sodium gradient. F-type ATPases consist of two structural domains, F(1) containing the extramembraneous catalytic core and F(0) containing the membrane proton channel, linked together by a central stalk and a peripheral stalk. During catalysis, ATP synthesis in the catalytic domain of F(1) is coupled via a rotary mechanism of the central stalk subunits to proton translocation. Its function is as follows. Component of the F(0) channel, it forms part of the peripheral stalk, linking F(1) to F(0). The sequence is that of ATP synthase subunit b from Francisella tularensis subsp. holarctica (strain OSU18).